The sequence spans 270 residues: uncharacterized protein (270 aa).

The HTH lysR-type domain maps to leucine 1–threonine 50. The segment at residues phenylalanine 10 to lysine 29 is a DNA-binding region (H-T-H motif).

Belongs to the LysR transcriptional regulatory family.

This is an uncharacterized protein from Staphylococcus xylosus.